A 451-amino-acid chain; its full sequence is Chromosomal replication initiator protein DnaA (451 aa).

A domain I, interacts with DnaA modulators region spans residues 1-72 (MQSIEDIWQE…ANILQEITGR (72 aa)). The tract at residues 72–108 (RLFDVRFIDGEQEENFEYTVIKPNPALDEDGIEIGKH) is domain II. Residues 109-325 (MLNPRYVFDT…GALIRVVAYS (217 aa)) are domain III, AAA+ region. ATP-binding residues include Gly-153, Gly-155, Lys-156, and Thr-157. The domain IV, binds dsDNA stretch occupies residues 326-451 (SLVNKDITAG…KNLRKAQNMF (126 aa)).

It belongs to the DnaA family. In terms of assembly, oligomerizes as a right-handed, spiral filament on DNA at oriC.

The protein localises to the cytoplasm. Functionally, plays an essential role in the initiation and regulation of chromosomal replication. ATP-DnaA binds to the origin of replication (oriC) to initiate formation of the DNA replication initiation complex once per cell cycle. Binds the DnaA box (a 9 base pair repeat at the origin) and separates the double-stranded (ds)DNA. Forms a right-handed helical filament on oriC DNA; dsDNA binds to the exterior of the filament while single-stranded (ss)DNA is stabiized in the filament's interior. The ATP-DnaA-oriC complex binds and stabilizes one strand of the AT-rich DNA unwinding element (DUE), permitting loading of DNA polymerase. After initiation quickly degrades to an ADP-DnaA complex that is not apt for DNA replication. Binds acidic phospholipids. This chain is Chromosomal replication initiator protein DnaA, found in Listeria monocytogenes serotype 4b (strain F2365).